A 219-amino-acid polypeptide reads, in one-letter code: Ribose-5-phosphate isomerase A (219 aa).

Residues 28-31 (TGST), 81-84 (DGAD), and 94-97 (KGGG) each bind substrate. E103 serves as the catalytic Proton acceptor. K121 contributes to the substrate binding site.

It belongs to the ribose 5-phosphate isomerase family. As to quaternary structure, homodimer.

The enzyme catalyses aldehydo-D-ribose 5-phosphate = D-ribulose 5-phosphate. It participates in carbohydrate degradation; pentose phosphate pathway; D-ribose 5-phosphate from D-ribulose 5-phosphate (non-oxidative stage): step 1/1. Functionally, catalyzes the reversible conversion of ribose-5-phosphate to ribulose 5-phosphate. This chain is Ribose-5-phosphate isomerase A, found in Escherichia fergusonii (strain ATCC 35469 / DSM 13698 / CCUG 18766 / IAM 14443 / JCM 21226 / LMG 7866 / NBRC 102419 / NCTC 12128 / CDC 0568-73).